The sequence spans 568 residues: Poly(A) polymerase (568 aa).

Residues 87-89 (YGS), 99-102 (SDID), 100-102 (DID), D154, K215, Y224, and 233-234 (GV) contribute to the ATP site. Mg(2+)-binding residues include D100, D102, and D154. Phosphoserine is present on residues S452 and S550. The segment at 525 to 568 (NEKRPSKKSKRKNLDARHETVKRSKSDAASGDNINGTTAAVDVN) is disordered. A compositionally biased stretch (basic and acidic residues) spans 536 to 550 (KNLDARHETVKRSKS).

Belongs to the poly(A) polymerase family. Component of the cleavage and polyadenylation factor (CPF) complex, which is composed of PTI1, SYC1, SSU72, GLC7, MPE1, REF2, PFS2, PTA1, YSH1/BRR5, SWD2, CFT2/YDH1, YTH1, CFT1/YHH1, FIP1 and PAP1. Interacts with FIR1 and RRP6. Requires Mg(2+) as cofactor. Mn(2+) serves as cofactor.

Its subcellular location is the nucleus. It catalyses the reaction RNA(n) + ATP = RNA(n)-3'-adenine ribonucleotide + diphosphate. Its function is as follows. Polymerase component of the cleavage and polyadenylation factor (CPF) complex, which plays a key role in polyadenylation-dependent pre-mRNA 3'-end formation and cooperates with cleavage factors including the CFIA complex and NAB4/CFIB. The chain is Poly(A) polymerase (PAP1) from Saccharomyces cerevisiae (strain ATCC 204508 / S288c) (Baker's yeast).